Consider the following 478-residue polypeptide: Putative UDP-glucose flavonoid 3-O-glucosyltransferase 3 (478 aa).

This sequence belongs to the UDP-glycosyltransferase family.

In Fragaria ananassa (Strawberry), this protein is Putative UDP-glucose flavonoid 3-O-glucosyltransferase 3.